A 100-amino-acid chain; its full sequence is Small ribosomal subunit protein uS14c (100 aa).

It belongs to the universal ribosomal protein uS14 family. In terms of assembly, part of the 30S ribosomal subunit.

The protein localises to the plastid. The protein resides in the chloroplast. In terms of biological role, binds 16S rRNA, required for the assembly of 30S particles. This is Small ribosomal subunit protein uS14c from Coffea arabica (Arabian coffee).